The chain runs to 396 residues: dTDP-epi-vancosaminyltransferase (396 aa).

A dTDP-beta-L-4-epi-vancosamine-binding site is contributed by 10-12 (SRG). The devancoaminyl-vancomycin site is built by D127, Q133, Y141, and Y169. DTDP-beta-L-4-epi-vancosamine is bound by residues R207, S230, 277–278 (EV), and 293–298 (HDSAGT).

It belongs to the glycosyltransferase 28 family.

The enzyme catalyses dTDP-beta-L-4-epi-vancosamine + devancoaminyl-vancomycin = chloroorienticin B + dTDP + H(+). It functions in the pathway antibiotic biosynthesis; vancomycin biosynthesis. Catalyzes the attachment of 4-epi-vancosamine from a TDP donor to the beta-OH-Tyr-6 of the aglycone cosubstrate in the biosynthesis of glycopeptide antibiotic chloroeremomycin, a member of the vancomycin group of antibiotics. Strongly prefers devancoaminyl-vancomycin (DVV) as substrate rather than the heptapeptide vancomycin aglycone (AGV). Acts downstream of GtfB. This Amycolatopsis orientalis (Nocardia orientalis) protein is dTDP-epi-vancosaminyltransferase (gtfA).